The following is a 98-amino-acid chain: NADH-ubiquinone oxidoreductase chain 4L (98 aa).

Transmembrane regions (helical) follow at residues 1–21 (MSMV…GLLM), 29–49 (SLLC…LTIL), and 61–81 (IILL…LVMV).

Belongs to the complex I subunit 4L family. In terms of assembly, core subunit of respiratory chain NADH dehydrogenase (Complex I) which is composed of 45 different subunits.

The protein resides in the mitochondrion inner membrane. The catalysed reaction is a ubiquinone + NADH + 5 H(+)(in) = a ubiquinol + NAD(+) + 4 H(+)(out). In terms of biological role, core subunit of the mitochondrial membrane respiratory chain NADH dehydrogenase (Complex I) which catalyzes electron transfer from NADH through the respiratory chain, using ubiquinone as an electron acceptor. Part of the enzyme membrane arm which is embedded in the lipid bilayer and involved in proton translocation. The sequence is that of NADH-ubiquinone oxidoreductase chain 4L (MT-ND4L) from Bos mutus grunniens (Wild yak).